Reading from the N-terminus, the 3907-residue chain is A-kinase anchor protein 9 (3907 aa).

Residues 1–14 (MEDEERQKKLEAGK) show a composition bias toward basic and acidic residues. The interval 1-57 (MEDEERQKKLEAGKAKLAQFRQRKAQSDGQSPSKKQKKKRKTSSSKHDVSAHHDLNI) is disordered. Residues 34 to 44 (KKQKKKRKTSS) are compositionally biased toward basic residues. Positions 45–56 (SKHDVSAHHDLN) are enriched in basic and acidic residues. Coiled coils occupy residues 152-902 (DSPT…ELHL), 932-1010 (EVVE…ENVQ), 1088-1173 (QPSE…QTMK), 1241-1268 (ELQD…EEYN), 1324-1380 (KLSS…ESTV), 1422-1447 (VKEE…VAKV), and 1573-1647 (SMDA…DNEN). Ser153 bears the Phosphoserine mark. A Phosphoserine modification is found at Ser1327. Over residues 1682-1692 (STQTQNGNENQ) the composition is skewed to low complexity. The disordered stretch occupies residues 1682-1713 (STQTQNGNENQGEVEEQTFKEKELDRKPEDVP). Residues 1698 to 1711 (QTFKEKELDRKPED) are compositionally biased toward basic and acidic residues. Ser1765 bears the Phosphoserine mark. 6 coiled-coil regions span residues 1845–2443 (NISS…VEKI), 2532–2549 (ETEM…IVEE), 2591–2764 (QLRE…SKKA), 3061–3088 (LNCL…ADRR), 3120–3466 (ELLE…NLNE), and 3583–3685 (SLTE…NDSL). Residues 2542-2555 (NLQKIVEEKVAAAL) are PKA-RII subunit binding domain. Residues 3377–3405 (RQQMEKDRQVHRKTLQTEQEANTEGQKKM) form a disordered region. A phosphoserine mark is found at Ser3690, Ser3842, Ser3865, and Ser3897.

In terms of assembly, interacts with the regulatory region of protein kinase N (PKN), protein phosphatase 2A (PP2A), protein phosphatase 1 (PP1) and the immature non-phosphorylated form of PKC epsilon. Interacts with CIP4 and FNBP1. Interacts with chloride intracellular channel proteins CLIC1, CLIC4 and CLIC5. CSNK1D binding promotes its centrosomal subcellular location. Interacts with GM130/GOLGA2; leading to recruitment to the Golgi apparatus. Interacts with KCNQ1; targets protein kinase A (PKA) catalytic and regulatory subunits and protein phosphatase 1 (PP1), to the heterodimer KCNQ1-KCNE1. Interacts with PDE4DIP isoform 13/MMG8/SMYLE; this interaction stabilizes both proteins. In complex with PDE4DIP isoform 13, recruits CAMSAP2 to the Golgi apparatus. Forms a pericentrosomal complex with CDK5RAP2, EB1/MAPRE1 and PDE4DIP isoform 13; within this complex, MAPRE1 binding to CDK5RAP2 may be mediated by PDE4DIP. Interacts with MAPRE1 and MAPRE3. Interacts (via C-terminus) with CAMSAP2; this interaction is much stronger in the presence of PDE4DIP isoform 13/MMG8/SMYLE. Interacts with CAMSAP3. Interacts (via C-terminus) with the gamma-tubulin ring complex (gamma-TuRC), composed of gamma-tubulin, TUBGCP2, TUBGCP3, TUBGCP4, TUBGCP5 and TUBGCP6. As to expression, widely expressed. Isoform 4: Highly expressed in skeletal muscle and in pancreas.

The protein localises to the golgi apparatus. Its subcellular location is the cytoplasm. The protein resides in the cytoskeleton. It is found in the microtubule organizing center. It localises to the centrosome. Its function is as follows. Scaffolding protein that assembles several protein kinases and phosphatases on the centrosome and Golgi apparatus. Required to maintain the integrity of the Golgi apparatus. Required for microtubule nucleation at the cis-side of the Golgi apparatus. Required for association of the centrosomes with the poles of the bipolar mitotic spindle during metaphase. In complex with PDE4DIP isoform 13/MMG8/SMYLE, recruits CAMSAP2 to the Golgi apparatus and tethers non-centrosomal minus-end microtubules to the Golgi, an important step for polarized cell movement. In complex with PDE4DIP isoform 13/MMG8/SMYLE, EB1/MAPRE1 and CDK5RAP2, contributes to microtubules nucleation and extension also from the centrosome to the cell periphery. Functionally, associated with the N-methyl-D-aspartate receptor and is specifically found in the neuromuscular junction (NMJ) as well as in neuronal synapses, suggesting a role in the organization of postsynaptic specializations. This chain is A-kinase anchor protein 9 (AKAP9), found in Homo sapiens (Human).